We begin with the raw amino-acid sequence, 274 residues long: Protein LIKE COV 3 (274 aa).

Residues 1 to 60 lie on the Cytoplasmic side of the membrane; the sequence is METRERDLERLIPMHKSGASPRDVVLSVPPSPLASPIHVAGKEAIYKVIRSWASKKFMTG. A helical transmembrane segment spans residues 61–81; that stretch reads CVILLPIAVTFYFTWWFIHFV. Topologically, residues 82 to 93 are extracellular; sequence DGFFSPIYTHLG. Residues 94 to 114 form a helical membrane-spanning segment; that stretch reads INMFGLGFVTSITFIFMVGVF. Residues 115–274 are Cytoplasmic-facing; that stretch reads MSSWLGASVL…VCLSLVLAWT (160 aa).

This sequence belongs to the plant COV1 protein family.

The protein localises to the membrane. This Arabidopsis thaliana (Mouse-ear cress) protein is Protein LIKE COV 3.